The primary structure comprises 156 residues: Small ribosomal subunit protein uS7 (156 aa).

This sequence belongs to the universal ribosomal protein uS7 family. In terms of assembly, part of the 30S ribosomal subunit. Contacts proteins S9 and S11.

In terms of biological role, one of the primary rRNA binding proteins, it binds directly to 16S rRNA where it nucleates assembly of the head domain of the 30S subunit. Is located at the subunit interface close to the decoding center, probably blocks exit of the E-site tRNA. This Rhizorhabdus wittichii (strain DSM 6014 / CCUG 31198 / JCM 15750 / NBRC 105917 / EY 4224 / RW1) (Sphingomonas wittichii) protein is Small ribosomal subunit protein uS7.